The primary structure comprises 193 residues: Acyl-homoserine-lactone synthase (193 aa).

Belongs to the autoinducer synthase family.

It carries out the reaction a fatty acyl-[ACP] + S-adenosyl-L-methionine = an N-acyl-L-homoserine lactone + S-methyl-5'-thioadenosine + holo-[ACP] + H(+). Its function is as follows. Required for the synthesis of OHHL (N-(3-oxohexanoyl)-L-homoserine lactone) also known as VAI or N-(beta-ketocaproyl)homoserine lactone or 3-oxo-N-(tetrahydro-2-oxo-3-furanyl)-hexanamide, an autoinducer molecule which binds to LuxR and thus acts in bioluminescence regulation. This is Acyl-homoserine-lactone synthase (luxI) from Aliivibrio fischeri (strain ATCC 700601 / ES114) (Vibrio fischeri).